The primary structure comprises 288 residues: Pantothenate synthetase (288 aa).

ATP is bound at residue 30–37 (MGNLHAGH). Catalysis depends on histidine 37, which acts as the Proton donor. Glutamine 61 is a binding site for (R)-pantoate. Glutamine 61 provides a ligand contact to beta-alanine. 149–152 (GLKD) is an ATP binding site. Position 155 (glutamine 155) interacts with (R)-pantoate. ATP contacts are provided by residues isoleucine 178 and 186–189 (LSSR).

It belongs to the pantothenate synthetase family. In terms of assembly, homodimer.

It is found in the cytoplasm. It carries out the reaction (R)-pantoate + beta-alanine + ATP = (R)-pantothenate + AMP + diphosphate + H(+). It functions in the pathway cofactor biosynthesis; (R)-pantothenate biosynthesis; (R)-pantothenate from (R)-pantoate and beta-alanine: step 1/1. Catalyzes the condensation of pantoate with beta-alanine in an ATP-dependent reaction via a pantoyl-adenylate intermediate. The protein is Pantothenate synthetase of Colwellia psychrerythraea (strain 34H / ATCC BAA-681) (Vibrio psychroerythus).